Here is a 193-residue protein sequence, read N- to C-terminus: MASPQNTSQKRFFQANSPGGMPTASQSQRSRILAQITLRFLAIAFTVTAIPVMITAKEPVSLLGLAITPSYKQSSAMKFLLGVNATVFAFTALSMLFVWPLRRSGSKPINYFFLHLHDMVMTLLLISGCAAATAVGYLSQYGQPETYWSPICDIVKKFCHQMLISTVLSYLAFFCYLALNILSVHKLMSRATE.

Residues 1 to 25 (MASPQNTSQKRFFQANSPGGMPTAS) form a disordered region. The Cytoplasmic portion of the chain corresponds to 1–35 (MASPQNTSQKRFFQANSPGGMPTASQSQRSRILAQ). A helical transmembrane segment spans residues 36-56 (ITLRFLAIAFTVTAIPVMITA). Residues 57–78 (KEPVSLLGLAITPSYKQSSAMK) are Extracellular-facing. The helical transmembrane segment at 79-99 (FLLGVNATVFAFTALSMLFVW) threads the bilayer. The Cytoplasmic segment spans residues 100–118 (PLRRSGSKPINYFFLHLHD). Residues 119–139 (MVMTLLLISGCAAATAVGYLS) form a helical membrane-spanning segment. Residues 140-161 (QYGQPETYWSPICDIVKKFCHQ) lie on the Extracellular side of the membrane. Residues 162 to 182 (MLISTVLSYLAFFCYLALNIL) form a helical membrane-spanning segment. Over 183–193 (SVHKLMSRATE) the chain is Cytoplasmic.

It belongs to the Casparian strip membrane proteins (CASP) family. In terms of assembly, homodimer and heterodimers.

It is found in the cell membrane. This chain is CASP-like protein 1F3, found in Populus trichocarpa (Western balsam poplar).